We begin with the raw amino-acid sequence, 360 residues long: Protein Wnt-2 (360 aa).

An N-terminal signal peptide occupies residues 1-26 (MNAPLGGIWLWLPLLLTWLTPEVSSS). 11 disulfide bridges follow: Cys-76-Cys-87, Cys-127-Cys-135, Cys-137-Cys-157, Cys-206-Cys-220, Cys-208-Cys-215, Cys-278-Cys-309, Cys-294-Cys-304, Cys-308-Cys-348, Cys-324-Cys-339, Cys-326-Cys-336, and Cys-331-Cys-332. The O-palmitoleoyl serine; by PORCN moiety is linked to residue Ser-212. Asn-295 is a glycosylation site (N-linked (GlcNAc...) asparagine).

Belongs to the Wnt family. Post-translationally, palmitoleoylation is required for efficient binding to frizzled receptors. Depalmitoleoylation leads to Wnt signaling pathway inhibition.

It is found in the secreted. The protein resides in the extracellular space. Its subcellular location is the extracellular matrix. Ligand for members of the frizzled family of seven transmembrane receptors. Probable developmental protein. May be a signaling molecule which affects the development of discrete regions of tissues. Is likely to signal over only few cell diameters. The sequence is that of Protein Wnt-2 (WNT2) from Eulemur macaco macaco (Black lemur).